The following is a 65-amino-acid chain: Vespid chemotactic peptide 5h (65 aa).

The signal sequence occupies residues 1 to 23 (MKYNIVFLFAIIASLACLQLTFA). 7 AXPX repeats span residues 23–26 (AAPA), 27–30 (ASPL), 31–34 (ANPG), 35–38 (ASPD), 39–42 (AAPN), 43–46 (ADPL), and 47–50 (ADPF). Positions 24–49 (APAASPLANPGASPDAAPNADPLADP) are excised as a propeptide. Leucine amide is present on Leu-62.

The protein belongs to the MCD family. Crabrolin subfamily. Expressed by the venom gland.

It is found in the secreted. Functionally, shows antimicrobial activity against the Gram-negative bacteria E.coli ATCC 25922 (MIC=30 ug/ml), the Gram-positive bacteria S.aureus ATCC 2592 (MIC=5 ug/ml) and the fungus C.albicans ATCC 2002 (MIC=25 ug/ml). Acts as a mast cell degranulating peptide. Its mast cell degranulation activity may be related to the activation of G-protein coupled receptors in mast cells as well as interaction with other proteins located in cell endosomal membranes in the mast cells. Induces the chemotaxis of neutrophils. This Vespa magnifica (Hornet) protein is Vespid chemotactic peptide 5h.